A 240-amino-acid chain; its full sequence is uncharacterized protein (240 aa).

Disordered stretches follow at residues 125–148 (RRLDFSSEDGEEEEENDYIDEDVD) and 177–240 (DESN…RKSR). The span at 130-148 (SSEDGEEEEENDYIDEDVD) shows a compositional bias: acidic residues. A compositionally biased stretch (basic and acidic residues) spans 192–203 (SPRKSHIDHDFV). The span at 204 to 217 (IPEDEMLSEEEEQE) shows a compositional bias: acidic residues. A Phosphoserine modification is found at Ser-231.

It belongs to the UTP5 family.

Its subcellular location is the cytoplasm. It is found in the nucleus. This is an uncharacterized protein from Schizosaccharomyces pombe (strain 972 / ATCC 24843) (Fission yeast).